Here is a 313-residue protein sequence, read N- to C-terminus: Ribosomal protein L11 methyltransferase (313 aa).

Residues Thr-161, Gly-182, Asp-204, and Asn-247 each contribute to the S-adenosyl-L-methionine site.

This sequence belongs to the methyltransferase superfamily. PrmA family.

It localises to the cytoplasm. It catalyses the reaction L-lysyl-[protein] + 3 S-adenosyl-L-methionine = N(6),N(6),N(6)-trimethyl-L-lysyl-[protein] + 3 S-adenosyl-L-homocysteine + 3 H(+). Functionally, methylates ribosomal protein L11. This chain is Ribosomal protein L11 methyltransferase, found in Alkaliphilus oremlandii (strain OhILAs) (Clostridium oremlandii (strain OhILAs)).